A 408-amino-acid polypeptide reads, in one-letter code: UDP-N-acetylglucosamine--dolichyl-phosphate N-acetylglucosaminephosphotransferase (408 aa).

The Lumenal segment spans residues 1–10; the sequence is MWAFPELPLP. A helical membrane pass occupies residues 11–38; sequence LLVNLFGSLLGFVATVTLIPAFRSHFIA. The Cytoplasmic portion of the chain corresponds to 39 to 58; that stretch reads ARLCGQDLNKLSRQQIPESQ. Residues 44–46 and Glu56 contribute to the UDP-N-acetyl-alpha-D-glucosamine site; that span reads QDL. A helical transmembrane segment spans residues 59–78; it reads GVICGAVFLIILFCFIPFPF. The Lumenal segment spans residues 79-91; sequence LNCFVEEQCKAFP. Residues 92-118 traverse the membrane as a helical segment; that stretch reads HHEFVALIGALLAICCMIFLGFADDVL. Topologically, residues 119 to 121 are cytoplasmic; the sequence is NLP. The chain crosses the membrane as a helical span at residues 122–143; the sequence is WRHKLLLPTAASLPLLMVYFTN. Lys125 lines the dolichyl phosphate pocket. At 144 to 166 the chain is on the lumenal side; the sequence is FGNTTIVVPKPFRWILGLHLDLG. Asn146 is a glycosylation site (N-linked (GlcNAc...) asparagine). The chain crosses the membrane as a helical span at residues 167–186; it reads ILYYVYMGLLAVFCTNAINI. Position 178-186 (178-186) interacts with dolichyl phosphate; sequence VFCTNAINI. Asn185 is a Mg(2+) binding site. Residues 187 to 192 are Cytoplasmic-facing; it reads LAGING. Asn191 contacts UDP-N-acetyl-alpha-D-glucosamine. The chain crosses the membrane as a helical span at residues 193–213; the sequence is LEAGQSLVISASIIVFNLVEL. Topologically, residues 214–218 are lumenal; it reads EGDYR. A helical transmembrane segment spans residues 219–242; it reads DDHVFSLYFMIPFFFTTLGLLYHN. The Cytoplasmic segment spans residues 243-250; sequence WYPSQVFV. A helical transmembrane segment spans residues 251-269; the sequence is GDTFCYFAGMTFAVVGILG. Position 252 (Asp252) interacts with Mg(2+). At 270–271 the chain is on the lumenal side; that stretch reads HF. A helical membrane pass occupies residues 272 to 293; sequence SKTMLLFFIPQVFNFLYSLPQL. Residues 294 to 375 lie on the Cytoplasmic side of the membrane; sequence LHAIPCPRHR…LLLKIFGPIH (82 aa). 301–303 contacts UDP-N-acetyl-alpha-D-glucosamine; the sequence is RHR. Residues 376–400 traverse the membrane as a helical segment; that stretch reads ERNLTLLLLLLQILSSAVTFSIRYQ. Topologically, residues 401–408 are lumenal; it reads LVRLFYDV.

This sequence belongs to the glycosyltransferase 4 family. As to quaternary structure, homodimer. Mg(2+) is required as a cofactor.

The protein localises to the endoplasmic reticulum membrane. The catalysed reaction is a di-trans,poly-cis-dolichyl phosphate + UDP-N-acetyl-alpha-D-glucosamine = an N-acetyl-alpha-D-glucosaminyl-diphospho-di-trans,poly-cis-dolichol + UMP. Its pathway is protein modification; protein glycosylation. With respect to regulation, inhibited by natural nucleoside antibiotic tunicamycin, which acts as a structural analog and competitor of UDP-GlcNAc. UDP-N-acetylglucosamine--dolichyl-phosphate N-acetylglucosaminephosphotransferase that operates in the biosynthetic pathway of dolichol-linked oligosaccharides, the glycan precursors employed in protein asparagine (N)-glycosylation. The assembly of dolichol-linked oligosaccharides begins on the cytosolic side of the endoplasmic reticulum membrane and finishes in its lumen. The sequential addition of sugars to dolichol pyrophosphate produces dolichol-linked oligosaccharides containing fourteen sugars, including two GlcNAcs, nine mannoses and three glucoses. Once assembled, the oligosaccharide is transferred from the lipid to nascent proteins by oligosaccharyltransferases. Catalyzes the initial step of dolichol-linked oligosaccharide biosynthesis, transfering GlcNAc-1-P from cytosolic UDP-GlcNAc onto the carrier lipid dolichyl phosphate (P-dolichol), yielding GlcNAc-P-P-dolichol embedded in the cytoplasmic leaflet of the endoplasmic reticulum membrane. This chain is UDP-N-acetylglucosamine--dolichyl-phosphate N-acetylglucosaminephosphotransferase (DPAGT1), found in Cricetulus longicaudatus (Long-tailed dwarf hamster).